The chain runs to 487 residues: Probable peptidoglycan glycosyltransferase FtsW (487 aa).

9 consecutive transmembrane segments (helical) span residues 30–50 (VSLILLALSLMAIGLVIVTSA), 71–91 (IYIVLAIGAALTVMQIPMQWW), 93–113 (TSNAWLLLLGLVLLIAVLLVG), 122–142 (WLAIGPITIQAAEPAKLFFFC), 167–187 (VVFFAFAVLLLLQPDLGTVVV), 203–223 (LWQFFGLAFTGGAAVTFLIMF), 282–302 (FIMAILAEELGFAGVLTVLAL), 332–352 (IGIWFSFQTAVNVGASAGILP), and 358–378 (FPLLSYGGSSLIIMAAAVGLL). Disordered regions lie at residues 398–419 (KAKASTSSSRKNKPKTASSAGK) and 444–487 (IDSI…DGYV). Positions 401-416 (ASTSSSRKNKPKTASS) are enriched in polar residues. Residues 444–453 (IDSIMDDFAQ) are compositionally biased toward acidic residues.

The protein belongs to the SEDS family. FtsW subfamily.

Its subcellular location is the cell inner membrane. It catalyses the reaction [GlcNAc-(1-&gt;4)-Mur2Ac(oyl-L-Ala-gamma-D-Glu-L-Lys-D-Ala-D-Ala)](n)-di-trans,octa-cis-undecaprenyl diphosphate + beta-D-GlcNAc-(1-&gt;4)-Mur2Ac(oyl-L-Ala-gamma-D-Glu-L-Lys-D-Ala-D-Ala)-di-trans,octa-cis-undecaprenyl diphosphate = [GlcNAc-(1-&gt;4)-Mur2Ac(oyl-L-Ala-gamma-D-Glu-L-Lys-D-Ala-D-Ala)](n+1)-di-trans,octa-cis-undecaprenyl diphosphate + di-trans,octa-cis-undecaprenyl diphosphate + H(+). Its pathway is cell wall biogenesis; peptidoglycan biosynthesis. In terms of biological role, peptidoglycan polymerase that is essential for cell division. The polypeptide is Probable peptidoglycan glycosyltransferase FtsW (Pseudoalteromonas atlantica (strain T6c / ATCC BAA-1087)).